Consider the following 387-residue polypeptide: uncharacterized protein (387 aa).

A disordered region spans residues 1–23 (MSSLPRNAVARNSKMHKKRDSGV). The stretch at 98–129 (KIARDLKKRQEDYEKTKLEVERLKRSEELANK) forms a coiled coil. Residues 146-255 (ENNTVEPNNE…NKKKKKEKNK (110 aa)) form a disordered region. 2 stretches are compositionally biased toward low complexity: residues 162–175 (EQIT…TTEQ) and 182–194 (EQTT…QTAE). Positions 204–213 (TVEKSGDQST) are enriched in basic and acidic residues. Positions 214–231 (EKTTQQTAEESVEQSTEQ) are enriched in polar residues.

This is an uncharacterized protein from Acanthamoeba polyphaga mimivirus (APMV).